Here is a 990-residue protein sequence, read N- to C-terminus: Pentatricopeptide repeat-containing protein At4g33170 (990 aa).

PPR repeat units follow at residues 73–107, 109–139, 144–178, 179–209, 210–244, 279–313, 314–348, 349–379, 380–414, 415–450, 451–477, 481–515, 516–550, 551–581, 582–616, 617–651, 652–682, 683–717, 718–753, and 754–788; these read ERFL…DLVS, NSIL…LRQD, SRMT…GLDG, DEFV…MPYR, DVVL…GLNP, EIIF…DVEC, DQVT…GLDL, MLTV…MSER, DLIS…GLKP, DQYT…NNVS, DSFV…LFER, DLVA…GERS, DDFT…GYDL, DLWV…IPVP, DDVA…GVLP, DEFT…NCTN, DPFV…IEMM, NITA…GIKP, DKVT…GIKP, and EIEH…ASAS. Residues 789–864 form a type E motif region; sequence MYRTLLAACR…DPGFSWIEVK (76 aa). Residues 865-895 are type E(+) motif; the sequence is NKIHIFVVDDRSNRQTELIYRKVKDMIRDIK. Residues 896–990 are type DYW motif; that stretch reads QEGYVPETDF…DGICSCGDYW (95 aa).

Belongs to the PPR family. PCMP-H subfamily.

This Arabidopsis thaliana (Mouse-ear cress) protein is Pentatricopeptide repeat-containing protein At4g33170 (PCMP-H53).